The chain runs to 336 residues: MSRVTLSRYLIEQTRSNNTPADLRFLIEVVARACKEISHAVSKGALGGVLGSMGTENVQGEVQKKLDVLSNEILLEANEWGGHLAGMASEEMDNAYQIPGKYPKGAYLLVFDPLDGSSNIDINAPVGTIFSVLRCPNEYLSQNEALDEKAFLQPGTQQVAAGYAIYGPQTMLVLTLGHGVKGFTLDREMGSFVLTHEDITIPESTQEFAINMSNQRHWEAPVQRYVSELLAGEEGPLKKNYNMRWVAAMVADVHRILTRGGLFMYPRDSREPSKPGKLRLMYEANPMSFLVEQAGGASTDGHQRILDIKPEGLHQRVAVFLGSKEEVARATAYHKE.

Glu90, Asp112, Leu114, and Asp115 together coordinate Mg(2+). Residues 115–118 (DGSS), Asn211, and Lys277 each bind substrate. Glu283 lines the Mg(2+) pocket.

This sequence belongs to the FBPase class 1 family. Homotetramer. The cofactor is Mg(2+).

Its subcellular location is the cytoplasm. The catalysed reaction is beta-D-fructose 1,6-bisphosphate + H2O = beta-D-fructose 6-phosphate + phosphate. It participates in carbohydrate biosynthesis; gluconeogenesis. The polypeptide is Fructose-1,6-bisphosphatase class 1 (Pseudomonas fluorescens (strain Pf0-1)).